The chain runs to 370 residues: UDP-N-acetylglucosamine--N-acetylmuramyl-(pentapeptide) pyrophosphoryl-undecaprenol N-acetylglucosamine transferase (370 aa).

Residues 10–12, asparagine 124, arginine 166, serine 198, isoleucine 252, and glutamine 297 each bind UDP-N-acetyl-alpha-D-glucosamine; that span reads TGG.

It belongs to the glycosyltransferase 28 family. MurG subfamily.

Its subcellular location is the cell membrane. It carries out the reaction di-trans,octa-cis-undecaprenyl diphospho-N-acetyl-alpha-D-muramoyl-L-alanyl-D-glutamyl-meso-2,6-diaminopimeloyl-D-alanyl-D-alanine + UDP-N-acetyl-alpha-D-glucosamine = di-trans,octa-cis-undecaprenyl diphospho-[N-acetyl-alpha-D-glucosaminyl-(1-&gt;4)]-N-acetyl-alpha-D-muramoyl-L-alanyl-D-glutamyl-meso-2,6-diaminopimeloyl-D-alanyl-D-alanine + UDP + H(+). Its pathway is cell wall biogenesis; peptidoglycan biosynthesis. Functionally, cell wall formation. Catalyzes the transfer of a GlcNAc subunit on undecaprenyl-pyrophosphoryl-MurNAc-pentapeptide (lipid intermediate I) to form undecaprenyl-pyrophosphoryl-MurNAc-(pentapeptide)GlcNAc (lipid intermediate II). This Finegoldia magna (strain ATCC 29328 / DSM 20472 / WAL 2508) (Peptostreptococcus magnus) protein is UDP-N-acetylglucosamine--N-acetylmuramyl-(pentapeptide) pyrophosphoryl-undecaprenol N-acetylglucosamine transferase.